The primary structure comprises 342 residues: Voltage-gated hydrogen channel 1 (342 aa).

2 disordered regions span residues 1–20 (MEGD…INPN) and 74–102 (FNDN…SEQK). Residues 1-148 (MEGDNCNKSR…KLRHILHSKP (148 aa)) lie on the Cytoplasmic side of the membrane. Polar residues predominate over residues 86 to 102 (QEQSTQNTMISMQSEQK). Residues 149–169 (IHVAIIVLVVLDSFLVVGELL) traverse the membrane as a helical segment. Residues 170 to 185 (IDLKVIIVPHGNPAPE) lie on the Extracellular side of the membrane. Residues 186–208 (ILHGFSLSILSIFMVEIALKIIA) traverse the membrane as a helical segment. Residues 209–217 (DHRHFIHHK) lie on the Cytoplasmic side of the membrane. Residues 218 to 238 (VEVLDAVVVVISFGVDIALIF) traverse the membrane as a helical segment. The Extracellular segment spans residues 239–247 (VGESEALAA). A helical membrane pass occupies residues 248-268 (IGLLVILRLWRVFRIINGIIV). Over 269–342 (TVKTKADDRV…HSTTTASADV (74 aa)) the chain is Cytoplasmic. The stretch at 271–315 (KTKADDRVHEIKKKNSELELQIHNLEEKLSQKEQDMSRLHEILRC) forms a coiled coil.

It belongs to the hydrogen channel family. As to quaternary structure, homodimer.

The protein resides in the membrane. It localises to the cell membrane. With respect to regulation, less sensitive to zinc ions as compared to the mammalian homologs. Functionally, mediates the voltage-dependent proton permeability of excitable membranes. Forms a proton-selective channel through which protons may pass in accordance with their electrochemical gradient. The chain is Voltage-gated hydrogen channel 1 (HVCN1) from Ciona intestinalis (Transparent sea squirt).